The chain runs to 1044 residues: AT-rich interactive domain-containing protein 5B (1044 aa).

Disordered regions lie at residues 143-211 (PRKK…GDEC), 301-350 (RFTK…GDKD), 363-392 (MEEL…LTED), 554-591 (NNYP…SSVE), 603-672 (QHAQ…SFLS), 733-767 (SQKE…LSTS), 811-835 (VSAS…RGEE), and 884-912 (TPLH…KPAE). Basic and acidic residues-rich tracts occupy residues 197–211 (VQSE…GDEC), 301–310 (RFTKGEEDKP), and 337–350 (RPKD…GDKD). In terms of domain architecture, ARID spans 212 to 304 (RTDEQAFLVA…LILPYERFTK (93 aa)). The segment covering 369 to 380 (KQNSQQLQAPTQ) has biased composition (polar residues). Over residues 565–591 (VSRRLSSSGTEVSSAGQSSSQVSSSVE) the composition is skewed to low complexity. Basic and acidic residues-rich tracts occupy residues 611–635 (RGSE…EPVH), 644–660 (PYLK…KSAE), and 733–746 (SQKE…RVTE). A compositionally biased stretch (low complexity) spans 752 to 767 (LSLPKSSPLKLPLSTS). 2 stretches are compositionally biased toward basic and acidic residues: residues 816–826 (KVTESHSKVLE) and 894–909 (LPGK…ESVK).

This sequence belongs to the ARID5B family.

Its subcellular location is the nucleus. Its function is as follows. Transcription coactivator that binds to the 5'-AATA[CT]-3' core sequence and plays a key role in adipogenesis and liver development. Required for adipogenesis: regulates triglyceride metabolism in adipocytes by regulating expression of adipogenic genes. This chain is AT-rich interactive domain-containing protein 5B (arid5b), found in Danio rerio (Zebrafish).